The primary structure comprises 871 residues: MNYKDTLLMPKTDFPMRGGLPNKEPQIQEMWDNDDQYRKALEKNKNNPSFILHDGPPYANGNLHMGHALNKIIKDFIVRYKTMQGFYAPYVPGWDTHGLPIEQALTKKGVDRKKMSVAEFREKCKEFALKQIDIQKKDFKRLGVRGDFNNPYITLTPEYEAAQIRLFGEMADKGLIYKGKKPVYWSPSSESSLAEAEIEYHDKRSASIYVAFDVKDSKGKVDSDAQFIIWTTTPWTIPSNVAITVHPELKYGQYNVDGHKYIVAQALSEEVAEALGWDKDSIQLEKEFTGKELEFVEAQHPFLDRVSLVINGEHVTTDAGTGCVHTAPGHGEDDYIVGQKYDLPVISPLNDKGVFTEEGGPFEGMFYDKANKAVTDLLKEKDALLKLDFITHSYPHDWRTKKPVIFRATPQWFASINKVKQDILDAIEDTNFKVDWGKTRIYNMIRDRGEWVISRQRVWGVPLPVFYAENGDIIMTKETVNHVADLFEKYGSNIWFEKEAKELLPEGFSHPGSPNGEFTKETDIMDVWFDSGSSHRGVLETRPELSFPADLYFEGSDQYRGWFNSSITTAVATRGQAPYKFLLSHGFVMDGEGKKMSKSLGNVIVPDQVVKQKGADIARLWVSSTDYLSDVRISDEILKKTSDVYRKIRNTLRFMLGNINDFNPETDSIAETNLLEVDRYLLNRLREFTASTINNYENFDYLNIYQEVQNFINVELSNFYLDYGKDILYIEKKDSHKRRSMQTVLYQILIDMTKLLAPILVHTAEEVWSHTPHVKEESVHLSDMPKVVDVDEELLEKWNTFMNLRDDVNRALEQARNEKVIGKSLEAKVVIGNNETFNTAEFLQQFNDLQQLFIVSQVEVKDKVKLKILIR.

Residues 57–67 carry the 'HIGH' region motif; the sequence is PYANGNLHMGH. E554 serves as a coordination point for L-isoleucyl-5'-AMP. The 'KMSKS' region motif lies at 595–599; the sequence is KMSKS. Residue K598 participates in ATP binding.

Belongs to the class-I aminoacyl-tRNA synthetase family. IleS type 1 subfamily. In terms of assembly, monomer.

The protein resides in the cytoplasm. It catalyses the reaction tRNA(Ile) + L-isoleucine + ATP = L-isoleucyl-tRNA(Ile) + AMP + diphosphate. In terms of biological role, catalyzes the attachment of isoleucine to tRNA(Ile). As IleRS can inadvertently accommodate and process structurally similar amino acids such as valine, to avoid such errors it has two additional distinct tRNA(Ile)-dependent editing activities. One activity is designated as 'pretransfer' editing and involves the hydrolysis of activated Val-AMP. The other activity is designated 'posttransfer' editing and involves deacylation of mischarged Val-tRNA(Ile). In Staphylococcus epidermidis, this protein is Isoleucine--tRNA ligase.